The sequence spans 430 residues: Shufflon protein A' (430 aa).

The interval M1–G361 is constant region. Positions T362 to N430 are variable region.

The chain is Shufflon protein A' from Escherichia coli.